The primary structure comprises 579 residues: uncharacterized protein (579 aa).

It belongs to the UbiD family.

This is an uncharacterized protein from Chlamydia muridarum (strain MoPn / Nigg).